The following is a 741-amino-acid chain: Eukaryotic translation initiation factor 3 subunit B (741 aa).

A compositionally biased stretch (polar residues) spans 1–10; it reads MAPSFDTLSE. The disordered stretch occupies residues 1 to 22; that stretch reads MAPSFDTLSEQDLHEEEEEEID. The segment covering 13 to 22 has biased composition (acidic residues); that stretch reads LHEEEEEEID. The RRM domain maps to 40–126; that stretch reads TFVVIDGLPV…HTLLVNKLMD (87 aa). WD repeat units follow at residues 193–230, 232–289, 303–344, 514–557, and 572–610; these read AHWT…KQKQ, PHPF…RSFV, QPKK…LLGK, IEKK…EKPE, and LEHY…HTFS. Positions 695–722 are disordered; the sequence is KDAYGLPEDVDDPKKAKDAPAVTSEQGE.

It belongs to the eIF-3 subunit B family. As to quaternary structure, component of the eukaryotic translation initiation factor 3 (eIF-3) complex.

The protein localises to the cytoplasm. Functionally, RNA-binding component of the eukaryotic translation initiation factor 3 (eIF-3) complex, which is involved in protein synthesis of a specialized repertoire of mRNAs and, together with other initiation factors, stimulates binding of mRNA and methionyl-tRNAi to the 40S ribosome. The eIF-3 complex specifically targets and initiates translation of a subset of mRNAs involved in cell proliferation. This Aspergillus clavatus (strain ATCC 1007 / CBS 513.65 / DSM 816 / NCTC 3887 / NRRL 1 / QM 1276 / 107) protein is Eukaryotic translation initiation factor 3 subunit B (prt1).